Consider the following 623-residue polypeptide: Protein Atg16l2 (623 aa).

Residues 64 to 79 (PKDAISTRHEDWREEV) are compositionally biased toward basic and acidic residues. The tract at residues 64 to 93 (PKDAISTRHEDWREEVSGTGPDQVSSPASL) is disordered. Positions 116–229 (VKKSAALDTL…ANQALVSQEL (114 aa)) form a coiled coil. 7 WD repeats span residues 338 to 377 (AHLS…LEAN), 382 to 421 (GAGG…SKET), 424 to 458 (GHKD…LGRA), 459 to 502 (YCSR…CIQV), 504 to 543 (PVQG…IRQV), 550 to 589 (KCSS…LETS), and 593 to 623 (PHCT…VLWH).

The protein belongs to the WD repeat ATG16 family. In terms of assembly, homooligomer. Heterooligomer with ATG16L2. Interacts with ATG5. Self-oligomerizes to form a 800-kDa complex composed of ATG12-ATG5 and ATG16L2. Interacts with RAB33B. Widely expressed.

It localises to the cytoplasm. The protein resides in the cytosol. May play a role in regulating epithelial homeostasis in an ATG16L1-dependent manner. This chain is Protein Atg16l2 (Atg16l2), found in Mus musculus (Mouse).